Consider the following 214-residue polypeptide: Glycerol-3-phosphate acyltransferase (214 aa).

The next 5 membrane-spanning stretches (helical) occupy residues Leu-8–Phe-28, Leu-70–Val-90, Ala-111–Val-131, Ile-144–Leu-164, and Pro-165–Arg-185.

This sequence belongs to the PlsY family. In terms of assembly, probably interacts with PlsX.

It is found in the cell membrane. It carries out the reaction an acyl phosphate + sn-glycerol 3-phosphate = a 1-acyl-sn-glycero-3-phosphate + phosphate. It participates in lipid metabolism; phospholipid metabolism. Its function is as follows. Catalyzes the transfer of an acyl group from acyl-phosphate (acyl-PO(4)) to glycerol-3-phosphate (G3P) to form lysophosphatidic acid (LPA). This enzyme utilizes acyl-phosphate as fatty acyl donor, but not acyl-CoA or acyl-ACP. This is Glycerol-3-phosphate acyltransferase from Streptococcus gordonii (strain Challis / ATCC 35105 / BCRC 15272 / CH1 / DL1 / V288).